The primary structure comprises 340 residues: MYG1 protein C27H6.8 (340 aa).

This sequence belongs to the MYG1 family.

In Caenorhabditis elegans, this protein is MYG1 protein C27H6.8.